The following is a 289-amino-acid chain: N-acetylmuramoyl-L-alanine amidase AmiA (289 aa).

The segment at residues 1–34 is a signal peptide (tat-type signal); sequence MSTFKPLKTLTSRRQVLKAGLAALTLSGMSQAIA. Residues 39–63 form a disordered region; sequence LKTSNGHSKPKAKKSGGKRVVVLDP. Residues 46–55 are compositionally biased toward basic residues; it reads SKPKAKKSGG. Positions 59–273 constitute a MurNAc-LAA domain; sequence VVLDPGHGGI…IATAIAEGVI (215 aa).

It belongs to the N-acetylmuramoyl-L-alanine amidase 3 family. Exported by the Tat system. The position of the signal peptide cleavage has not been experimentally proven. Can also be exported by the Sec system.

The protein localises to the periplasm. The enzyme catalyses Hydrolyzes the link between N-acetylmuramoyl residues and L-amino acid residues in certain cell-wall glycopeptides.. In terms of biological role, cell-wall hydrolase involved in septum cleavage during cell division. Can also act as powerful autolysin in the presence of murein synthesis inhibitors. The polypeptide is N-acetylmuramoyl-L-alanine amidase AmiA (amiA) (Escherichia coli (strain K12)).